Consider the following 394-residue polypeptide: Chorismate synthase (394 aa).

Arg48 provides a ligand contact to NADP(+). Residues 52-90 (QSMITTSRGEPDEVSIQSGLQDGYTTGTPIGMTIENKDA) are disordered. Polar residues predominate over residues 66-79 (SIQSGLQDGYTTGT). FMN-binding positions include 125–127 (RSS), Gly297, 312–316 (HAPTS), and Arg339.

The protein belongs to the chorismate synthase family. It depends on FMNH2 as a cofactor.

It carries out the reaction 5-O-(1-carboxyvinyl)-3-phosphoshikimate = chorismate + phosphate. It participates in metabolic intermediate biosynthesis; chorismate biosynthesis; chorismate from D-erythrose 4-phosphate and phosphoenolpyruvate: step 7/7. In terms of biological role, catalyzes the anti-1,4-elimination of the C-3 phosphate and the C-6 proR hydrogen from 5-enolpyruvylshikimate-3-phosphate (EPSP) to yield chorismate, which is the branch point compound that serves as the starting substrate for the three terminal pathways of aromatic amino acid biosynthesis. This reaction introduces a second double bond into the aromatic ring system. The protein is Chorismate synthase of Halobacterium salinarum (strain ATCC 700922 / JCM 11081 / NRC-1) (Halobacterium halobium).